A 158-amino-acid polypeptide reads, in one-letter code: Ecotin (158 aa).

The N-terminal stretch at 1-21 (MRLLPLASVTLLSVLCAQAFA) is a signal peptide. Cys-67 and Cys-104 form a disulfide bridge.

The protein belongs to the protease inhibitor I11 (ecotin) family. Homodimer.

The protein resides in the periplasm. Functionally, general inhibitor of family S1 serine proteases. This is Ecotin from Pseudomonas fluorescens (strain ATCC BAA-477 / NRRL B-23932 / Pf-5).